Here is a 369-residue protein sequence, read N- to C-terminus: L-lactate oxidase (369 aa).

Positions 13 to 369 (EKKLNVLNLD…KNAKLLNIRY (357 aa)) constitute an FMN hydroxy acid dehydrogenase domain. Residue tyrosine 39 coordinates pyruvate. Residues 92-94 (PAA), serine 121, and glutamine 143 each bind FMN. Tyrosine 145 contributes to the pyruvate binding site. Threonine 171 serves as a coordination point for FMN. Residue arginine 180 participates in pyruvate binding. The FMN site is built by lysine 240 and serine 262. Histidine 264 and arginine 267 together coordinate pyruvate. Histidine 264 acts as the Proton acceptor in catalysis. Residues 295 to 299 (DSGIR) and arginine 319 contribute to the FMN site.

The protein belongs to the FMN-dependent alpha-hydroxy acid dehydrogenase family. In terms of assembly, homotetramer. It depends on FMN as a cofactor.

The catalysed reaction is (S)-lactate + O2 = pyruvate + H2O2. Catalyzes the oxidation of (S)-lactate (L-lactate) to pyruvate, with a reduction of O2 to H2O2. May be involved in the utilization of L-lactate as an energy source for growth. The protein is L-lactate oxidase of Lentilactobacillus hilgardii (strain ATCC 8290 / DSM 20176 / CCUG 30140 / JCM 1155 / KCTC 3500 / NBRC 15886 / NCIMB 8040 / NRRL B-1843 / 9).